Consider the following 302-residue polypeptide: tRNA pseudouridine synthase B (302 aa).

Aspartate 45 serves as the catalytic Nucleophile.

The protein belongs to the pseudouridine synthase TruB family. Type 1 subfamily.

The catalysed reaction is uridine(55) in tRNA = pseudouridine(55) in tRNA. Functionally, responsible for synthesis of pseudouridine from uracil-55 in the psi GC loop of transfer RNAs. This chain is tRNA pseudouridine synthase B, found in Francisella tularensis subsp. novicida (strain U112).